A 251-amino-acid polypeptide reads, in one-letter code: uncharacterized protein (251 aa).

This is an uncharacterized protein from Bacillus subtilis (strain 168).